The chain runs to 49 residues: MRVNITLACTECGERNYISTKNKRNNPDRVEFKKYCPRDKKSTLHRETK.

Positions 21-49 (KNKRNNPDRVEFKKYCPRDKKSTLHRETK) are disordered. Basic and acidic residues predominate over residues 25–49 (NNPDRVEFKKYCPRDKKSTLHRETK).

This sequence belongs to the bacterial ribosomal protein bL33 family.

This is Large ribosomal subunit protein bL33C from Bacillus licheniformis (strain ATCC 14580 / DSM 13 / JCM 2505 / CCUG 7422 / NBRC 12200 / NCIMB 9375 / NCTC 10341 / NRRL NRS-1264 / Gibson 46).